The chain runs to 251 residues: Esterase mlcF (251 aa).

Catalysis depends on charge relay system residues serine 126, aspartate 193, and histidine 221.

Belongs to the LovG family.

It catalyses the reaction dihydro-ML-236C-[compactin nonaketide synthase] + H2O = holo-[compactin nonaketide synthase] + dihydro-ML-236C carboxylate + H(+). It functions in the pathway polyketide biosynthesis. Esterase; part of the gene cluster that mediates the biosynthesis of compactin, also known as mevastatin or ML-236B, and which acts as a potent competitive inhibitor of HMG-CoA reductase. Compactin biosynthesis is performed in two stages. The first stage is catalyzed by the nonaketide synthase mlcA, which belongs to type I polyketide synthases and catalyzes the iterative nine-step formation of the polyketide. This PKS stage is completed by the action of dehydrogenase mlcG, which catalyzes the NADPH-dependent reduction of the unsaturated tetra-, penta- and heptaketide intermediates that arise during the mlcA-mediated biosynthesis of the nonaketide chain and leads to dihydro-ML-236C carboxylate. Covalently bound dihydro-ML-236C carboxylate is released from mlcA by the mlcF esterase. Conversion of dihydro-ML-236C carboxylate into ML-236A carboxylate is subsequently performed with the participation of molecular oxygen and P450 monoogygenase mlcC. Finally, mlcH performs the conversion of ML-236A carboxylate to ML-236B/compactin carboxylate through the addition of the side-chain diketide moiety produced by the diketide synthase mlcB. This is Esterase mlcF from Penicillium citrinum.